Here is a 192-residue protein sequence, read N- to C-terminus: UPF0312 protein Pput_4854 (192 aa).

An N-terminal signal peptide occupies residues 1-23 (MLKKTFAALALGTALLSAGQAMA).

It belongs to the UPF0312 family. Type 1 subfamily.

It localises to the periplasm. The sequence is that of UPF0312 protein Pput_4854 from Pseudomonas putida (strain ATCC 700007 / DSM 6899 / JCM 31910 / BCRC 17059 / LMG 24140 / F1).